A 103-amino-acid chain; its full sequence is Large ribosomal subunit protein bL21 (103 aa).

This sequence belongs to the bacterial ribosomal protein bL21 family. In terms of assembly, part of the 50S ribosomal subunit. Contacts protein L20.

Its function is as follows. This protein binds to 23S rRNA in the presence of protein L20. The chain is Large ribosomal subunit protein bL21 from Psychrobacter sp. (strain PRwf-1).